The sequence spans 254 residues: Serotonin N-acetyltransferase 1, chloroplastic (254 aa).

The transit peptide at 1-74 (MAPAASASAS…LRSGFLKSNN (74 aa)) directs the protein to the chloroplast. The region spanning 111–254 (IIFSSAGDVN…IKGMFWYPRF (144 aa)) is the N-acetyltransferase domain.

The protein belongs to the acetyltransferase family. In terms of tissue distribution, expressed in roots and shoots.

It localises to the plastid. Its subcellular location is the chloroplast. The protein localises to the nucleus. The enzyme catalyses serotonin + acetyl-CoA = N-acetylserotonin + CoA + H(+). It carries out the reaction tyramine + acetyl-CoA = N-acetyltyramine + CoA + H(+). It catalyses the reaction tryptamine + acetyl-CoA = N-acetyltryptamine + CoA + H(+). The catalysed reaction is 5-methoxytryptamine + acetyl-CoA = melatonin + CoA + H(+). The protein operates within aromatic compound metabolism; melatonin biosynthesis; melatonin from serotonin: step 1/2. Its function is as follows. Catalyzes the N-acetylation of serotonin into N-acetylserotonin, the penultimate step in the synthesis of melatonin. Catalyzes in vitro the N-acetylation of tryptamine to produce N-acetyltryptamine, 5-methoxytryptamine to produce melatonin and tyramine to produce N-acetyltyramine. This is Serotonin N-acetyltransferase 1, chloroplastic from Oryza sativa subsp. japonica (Rice).